We begin with the raw amino-acid sequence, 137 residues long: Prefoldin subunit alpha (137 aa).

The protein belongs to the prefoldin subunit alpha family. Heterohexamer of two alpha and four beta subunits.

It is found in the cytoplasm. In terms of biological role, molecular chaperone capable of stabilizing a range of proteins. Seems to fulfill an ATP-independent, HSP70-like function in archaeal de novo protein folding. The polypeptide is Prefoldin subunit alpha (pfdA) (Archaeoglobus fulgidus (strain ATCC 49558 / DSM 4304 / JCM 9628 / NBRC 100126 / VC-16)).